The following is a 452-amino-acid chain: Adenylyltransferase and sulfurtransferase MOCS3 (452 aa).

Residues G99, D120, 127–131, K144, and 188–189 each bind ATP; these read SNLHR and DN. Zn(2+) is bound by residues C230 and C233. C247 serves as the catalytic Glycyl thioester intermediate; for adenylyltransferase activity. 2 residues coordinate Zn(2+): C305 and C308. The region spanning 354–450 is the Rhodanese domain; the sequence is KTKAHLLLDV…WTNQVDQSFP (97 aa). C409 (cysteine persulfide intermediate; for sulfurtransferase activity) is an active-site residue.

This sequence in the N-terminal section; belongs to the HesA/MoeB/ThiF family. UBA4 subfamily. Zn(2+) is required as a cofactor.

Its subcellular location is the cytoplasm. It is found in the cytosol. The enzyme catalyses [molybdopterin-synthase sulfur-carrier protein]-C-terminal Gly-Gly + ATP + H(+) = [molybdopterin-synthase sulfur-carrier protein]-C-terminal Gly-Gly-AMP + diphosphate. The catalysed reaction is [molybdopterin-synthase sulfur-carrier protein]-C-terminal Gly-Gly-AMP + S-sulfanyl-L-cysteinyl-[cysteine desulfurase] + AH2 = [molybdopterin-synthase sulfur-carrier protein]-C-terminal-Gly-aminoethanethioate + L-cysteinyl-[cysteine desulfurase] + A + AMP + 2 H(+). Its pathway is tRNA modification; 5-methoxycarbonylmethyl-2-thiouridine-tRNA biosynthesis. It participates in cofactor biosynthesis; molybdopterin biosynthesis. Plays a central role in 2-thiolation of mcm(5)S(2)U at tRNA wobble positions of cytosolic tRNA(Lys), tRNA(Glu) and tRNA(Gln). Also essential during biosynthesis of the molybdenum cofactor. Acts by mediating the C-terminal thiocarboxylation of sulfur carriers URM1 and MOCS2A. Its N-terminus first activates URM1 and MOCS2A as acyl-adenylates (-COAMP), then the persulfide sulfur on the catalytic cysteine is transferred to URM1 and MOCS2A to form thiocarboxylation (-COSH) of their C-terminus. The reaction probably involves hydrogen sulfide that is generated from the persulfide intermediate and that acts as a nucleophile towards URM1 and MOCS2A. Subsequently, a transient disulfide bond is formed. Does not use thiosulfate as sulfur donor; NFS1 probably acting as a sulfur donor for thiocarboxylation reactions. The chain is Adenylyltransferase and sulfurtransferase MOCS3 from Drosophila virilis (Fruit fly).